Consider the following 120-residue polypeptide: Large ribosomal subunit protein bL20 (120 aa).

The protein belongs to the bacterial ribosomal protein bL20 family.

Functionally, binds directly to 23S ribosomal RNA and is necessary for the in vitro assembly process of the 50S ribosomal subunit. It is not involved in the protein synthesizing functions of that subunit. The chain is Large ribosomal subunit protein bL20 from Karelsulcia muelleri (strain GWSS) (Sulcia muelleri).